A 444-amino-acid chain; its full sequence is Tubulin beta-4A chain (444 aa).

The MREI motif signature appears at 1-4 (MREI). Gln-11, Glu-69, Ser-138, Gly-142, Thr-143, and Gly-144 together coordinate GTP. Residue Glu-69 participates in Mg(2+) binding. A Phosphoserine; by CDK1 modification is found at Ser-172. Residues Asn-204 and Asn-226 each coordinate GTP. Glu-436 carries the 5-glutamyl polyglutamate modification.

It belongs to the tubulin family. Dimer of alpha and beta chains. A typical microtubule is a hollow water-filled tube with an outer diameter of 25 nm and an inner diameter of 15 nM. Alpha-beta heterodimers associate head-to-tail to form protofilaments running lengthwise along the microtubule wall with the beta-tubulin subunit facing the microtubule plus end conferring a structural polarity. Microtubules usually have 13 protofilaments but different protofilament numbers can be found in some organisms and specialized cells. Mg(2+) serves as cofactor. Post-translationally, some glutamate residues at the C-terminus are polyglycylated, resulting in polyglycine chains on the gamma-carboxyl group. Glycylation is mainly limited to tubulin incorporated into axonemes (cilia and flagella) whereas glutamylation is prevalent in neuronal cells, centrioles, axonemes, and the mitotic spindle. Both modifications can coexist on the same protein on adjacent residues, and lowering polyglycylation levels increases polyglutamylation, and reciprocally. Cilia and flagella glycylation is required for their stability and maintenance. Flagella glycylation controls sperm motility. Some glutamate residues at the C-terminus are polyglutamylated, resulting in polyglutamate chains on the gamma-carboxyl group. Polyglutamylation plays a key role in microtubule severing by spastin (SPAST). SPAST preferentially recognizes and acts on microtubules decorated with short polyglutamate tails: severing activity by SPAST increases as the number of glutamates per tubulin rises from one to eight, but decreases beyond this glutamylation threshold. Glutamylation is also involved in cilia motility. In terms of processing, phosphorylated on Ser-172 by CDK1 during the cell cycle, from metaphase to telophase, but not in interphase. This phosphorylation inhibits tubulin incorporation into microtubules.

Its subcellular location is the cytoplasm. It is found in the cytoskeleton. Its function is as follows. Tubulin is the major constituent of microtubules, a cylinder consisting of laterally associated linear protofilaments composed of alpha- and beta-tubulin heterodimers. Microtubules grow by the addition of GTP-tubulin dimers to the microtubule end, where a stabilizing cap forms. Below the cap, tubulin dimers are in GDP-bound state, owing to GTPase activity of alpha-tubulin. This chain is Tubulin beta-4A chain (TUBB4A), found in Bos taurus (Bovine).